We begin with the raw amino-acid sequence, 149 residues long: Flagellar assembly factor FliW (149 aa).

It belongs to the FliW family. In terms of assembly, interacts with translational regulator CsrA and flagellin(s).

It is found in the cytoplasm. In terms of biological role, acts as an anti-CsrA protein, binds CsrA and prevents it from repressing translation of its target genes, one of which is flagellin. Binds to flagellin and participates in the assembly of the flagellum. In Thermotoga maritima (strain ATCC 43589 / DSM 3109 / JCM 10099 / NBRC 100826 / MSB8), this protein is Flagellar assembly factor FliW.